A 292-amino-acid polypeptide reads, in one-letter code: Large ribosomal subunit protein bL19m (292 aa).

A disordered region spans residues 41 to 60; it reads SRFQSTGPSEPGGFKPPPKP. Ser-77 is subject to Phosphoserine.

This sequence belongs to the bacterial ribosomal protein bL19 family. Component of the mitochondrial ribosome large subunit (39S) which comprises a 16S rRNA and about 50 distinct proteins.

The protein resides in the mitochondrion. This chain is Large ribosomal subunit protein bL19m (Mrpl19), found in Mus musculus (Mouse).